Consider the following 176-residue polypeptide: Shikimate kinase (176 aa).

14–19 (GAGKSS) is an ATP binding site. Ser18 provides a ligand contact to Mg(2+). Residues Asp36, Arg60, and Gly82 each contribute to the substrate site. Arg120 serves as a coordination point for ATP. Arg138 provides a ligand contact to substrate.

This sequence belongs to the shikimate kinase family. As to quaternary structure, monomer. Mg(2+) is required as a cofactor.

Its subcellular location is the cytoplasm. It catalyses the reaction shikimate + ATP = 3-phosphoshikimate + ADP + H(+). It participates in metabolic intermediate biosynthesis; chorismate biosynthesis; chorismate from D-erythrose 4-phosphate and phosphoenolpyruvate: step 5/7. Catalyzes the specific phosphorylation of the 3-hydroxyl group of shikimic acid using ATP as a cosubstrate. The chain is Shikimate kinase from Dehalococcoides mccartyi (strain ATCC BAA-2266 / KCTC 15142 / 195) (Dehalococcoides ethenogenes (strain 195)).